A 471-amino-acid chain; its full sequence is ATP synthase subunit beta (471 aa).

Position 154-161 (G154–T161) interacts with ATP.

Belongs to the ATPase alpha/beta chains family. F-type ATPases have 2 components, CF(1) - the catalytic core - and CF(0) - the membrane proton channel. CF(1) has five subunits: alpha(3), beta(3), gamma(1), delta(1), epsilon(1). CF(0) has three main subunits: a(1), b(2) and c(9-12). The alpha and beta chains form an alternating ring which encloses part of the gamma chain. CF(1) is attached to CF(0) by a central stalk formed by the gamma and epsilon chains, while a peripheral stalk is formed by the delta and b chains.

The protein localises to the cell membrane. It carries out the reaction ATP + H2O + 4 H(+)(in) = ADP + phosphate + 5 H(+)(out). In terms of biological role, produces ATP from ADP in the presence of a proton gradient across the membrane. The catalytic sites are hosted primarily by the beta subunits. The polypeptide is ATP synthase subunit beta (Mesomycoplasma hyopneumoniae (strain J / ATCC 25934 / NCTC 10110) (Mycoplasma hyopneumoniae)).